We begin with the raw amino-acid sequence, 869 residues long: Speckle targeted PIP5K1A-regulated poly(A) polymerase (869 aa).

The Matrin-type zinc-finger motif lies at 16–46 (FRCCLCDVTTANRPSLDAHLKGRKHRDLVQL). In terms of domain architecture, RRM spans 56 to 128 (RSVFVSGFPR…HGLRVRPREQ (73 aa)). The disordered stretch occupies residues 114-144 (HSLGGHGLRVRPREQKEFQSPASKSPKGVDS). Ser-205 contributes to the ATP binding site. The Mg(2+) site is built by Asp-216 and Asp-218. Asp-216 and Asp-218 together coordinate UTP. 2 disordered regions span residues 226–247 (MEET…LDSA) and 259–335 (CTPA…ASKD). Composition is skewed to polar residues over residues 266–276 (DSLSPTSVQES) and 283–299 (TPSS…LGSD). Over residues 314–335 (QEDRKEGKQGKELELAEEASKD) the composition is skewed to basic and acidic residues. Asn-395 contacts ATP. Positions 395, 417, 435, and 552 each coordinate UTP. Residues 494–552 (LSSLLAQFFSCVSCLDLSGSLLSLREGRPLMVAEGLPSDLWEGLRLGPMNLQDPFDLSH) form the PAP-associated domain. The KA1; binds the bulging loops of U6 snRNA but is dispensable for terminal uridylyltransferase activity stretch occupies residues 601 to 869 (SSPSSLLSAK…IPQALKNLLK (269 aa)). 4 disordered regions span residues 640–689 (QGTK…DHSE), 735–757 (MKPE…HPSS), 775–796 (ARRR…TGAE), and 803–822 (RVTQ…PGEP). Positions 671–689 (KSFEEGKEEPQGCAGDHSE) are enriched in basic and acidic residues. Phosphoserine occurs at positions 688 and 744.

It belongs to the DNA polymerase type-B-like family. In terms of assembly, associates with the cleavage and polyadenylation specificity factor (CPSF) complex. Interacts with CPSF1 and CPSF3; the interaction is direct. Interacts with PIP5K1A. It depends on Mg(2+) as a cofactor. Mn(2+) is required as a cofactor. Phosphorylated by CK1 in the proline-rich (Pro-rich) region.

Its subcellular location is the nucleus. The protein localises to the nucleolus. It is found in the nucleus speckle. The enzyme catalyses RNA(n) + UTP = RNA(n)-3'-uridine ribonucleotide + diphosphate. It catalyses the reaction RNA(n) + ATP = RNA(n)-3'-adenine ribonucleotide + diphosphate. Its activity is regulated as follows. Adenylyltransferase activity is specifically phosphatidylinositol 4,5-bisphosphate (PtdIns(4,5)P2). Its function is as follows. Poly(A) polymerase that creates the 3'-poly(A) tail of specific pre-mRNAs. Localizes to nuclear speckles together with PIP5K1A and mediates polyadenylation of a select set of mRNAs, such as HMOX1. In addition to polyadenylation, it is also required for the 3'-end cleavage of pre-mRNAs: binds to the 3'UTR of targeted pre-mRNAs and promotes the recruitment and assembly of the CPSF complex on the 3'UTR of pre-mRNAs. In addition to adenylyltransferase activity, also has uridylyltransferase activity. However, the ATP ratio is higher than UTP in cells, suggesting that it functions primarily as a poly(A) polymerase. Acts as a specific terminal uridylyltransferase for U6 snRNA in vitro: responsible for a controlled elongation reaction that results in the restoration of the four 3'-terminal UMP-residues found in newly transcribed U6 snRNA. Not involved in replication-dependent histone mRNA degradation. The protein is Speckle targeted PIP5K1A-regulated poly(A) polymerase (Tut1) of Mus musculus (Mouse).